Here is a 234-residue protein sequence, read N- to C-terminus: UPF0502 protein BTH_II0990 (234 aa).

This sequence belongs to the UPF0502 family.

The sequence is that of UPF0502 protein BTH_II0990 from Burkholderia thailandensis (strain ATCC 700388 / DSM 13276 / CCUG 48851 / CIP 106301 / E264).